The chain runs to 147 residues: Transcriptional regulator MraZ (147 aa).

2 consecutive SpoVT-AbrB domains span residues 5 to 50 and 79 to 122; these read AVAL…PLTA and AQEE…SDAG.

This sequence belongs to the MraZ family. As to quaternary structure, forms oligomers.

The protein localises to the cytoplasm. It localises to the nucleoid. The protein is Transcriptional regulator MraZ of Azoarcus sp. (strain BH72).